The chain runs to 136 residues: Small ribosomal subunit protein uS11 (136 aa).

This sequence belongs to the universal ribosomal protein uS11 family. In terms of assembly, part of the 30S ribosomal subunit. Interacts with proteins S7 and S18. Binds to IF-3.

Located on the platform of the 30S subunit, it bridges several disparate RNA helices of the 16S rRNA. Forms part of the Shine-Dalgarno cleft in the 70S ribosome. This Leptospira borgpetersenii serovar Hardjo-bovis (strain JB197) protein is Small ribosomal subunit protein uS11.